A 53-amino-acid chain; its full sequence is ATP synthase protein 8 (53 aa).

Residues 4-24 (MAPISWLLLFIVFSITFILFC) form a helical membrane-spanning segment.

The protein belongs to the ATPase protein 8 family. In terms of assembly, F-type ATPases have 2 components, CF(1) - the catalytic core - and CF(0) - the membrane proton channel.

The protein localises to the mitochondrion membrane. Functionally, mitochondrial membrane ATP synthase (F(1)F(0) ATP synthase or Complex V) produces ATP from ADP in the presence of a proton gradient across the membrane which is generated by electron transport complexes of the respiratory chain. F-type ATPases consist of two structural domains, F(1) - containing the extramembraneous catalytic core and F(0) - containing the membrane proton channel, linked together by a central stalk and a peripheral stalk. During catalysis, ATP synthesis in the catalytic domain of F(1) is coupled via a rotary mechanism of the central stalk subunits to proton translocation. Part of the complex F(0) domain. Minor subunit located with subunit a in the membrane. The chain is ATP synthase protein 8 (mt:ATPase8) from Drosophila yakuba (Fruit fly).